We begin with the raw amino-acid sequence, 447 residues long: Tubulin alpha chain (447 aa).

7 residues coordinate GTP: Gln-11, Glu-71, Gly-144, Thr-145, Thr-179, Asn-206, and Asn-228. Glu-71 provides a ligand contact to Mg(2+). The active site involves Glu-254.

This sequence belongs to the tubulin family. In terms of assembly, dimer of alpha and beta chains. A typical microtubule is a hollow water-filled tube with an outer diameter of 25 nm and an inner diameter of 15 nM. Alpha-beta heterodimers associate head-to-tail to form protofilaments running lengthwise along the microtubule wall with the beta-tubulin subunit facing the microtubule plus end conferring a structural polarity. Microtubules usually have 13 protofilaments but different protofilament numbers can be found in some organisms and specialized cells. The cofactor is Mg(2+).

The protein resides in the cytoplasm. The protein localises to the cytoskeleton. The enzyme catalyses GTP + H2O = GDP + phosphate + H(+). Tubulin is the major constituent of microtubules, a cylinder consisting of laterally associated linear protofilaments composed of alpha- and beta-tubulin heterodimers. Microtubules grow by the addition of GTP-tubulin dimers to the microtubule end, where a stabilizing cap forms. Below the cap, tubulin dimers are in GDP-bound state, owing to GTPase activity of alpha-tubulin. This is Tubulin alpha chain (TUBA) from Avena sativa (Oat).